Consider the following 187-residue polypeptide: Probable chemoreceptor glutamine deamidase CheD 1 (187 aa).

The protein belongs to the CheD family.

The enzyme catalyses L-glutaminyl-[protein] + H2O = L-glutamyl-[protein] + NH4(+). Functionally, probably deamidates glutamine residues to glutamate on methyl-accepting chemotaxis receptors (MCPs), playing an important role in chemotaxis. In Ruegeria sp. (strain TM1040) (Silicibacter sp.), this protein is Probable chemoreceptor glutamine deamidase CheD 1.